A 291-amino-acid chain; its full sequence is Protease HtpX homolog (291 aa).

The next 2 helical transmembrane spans lie at 4–24 and 39–59; these read ILLFVLTNVAVVAVLGIVASL and GSLLGFALVIGFGGAIISLLI. His-144 contributes to the Zn(2+) binding site. Glu-145 is a catalytic residue. His-148 provides a ligand contact to Zn(2+). 2 consecutive transmembrane segments (helical) span residues 159-179 and 199-219; these read LIQGVMNTFVVFLSRVIAFAI and ITTVVLDIVLGFAAAIVVAWF. Position 224 (Glu-224) interacts with Zn(2+).

It belongs to the peptidase M48B family. The cofactor is Zn(2+).

Its subcellular location is the cell inner membrane. In Albidiferax ferrireducens (strain ATCC BAA-621 / DSM 15236 / T118) (Rhodoferax ferrireducens), this protein is Protease HtpX homolog.